Reading from the N-terminus, the 380-residue chain is Crotonobetainyl-CoA reductase (380 aa).

The protein belongs to the acyl-CoA dehydrogenase family. In terms of assembly, homotetramer. FAD is required as a cofactor.

The protein localises to the cytoplasm. The catalysed reaction is 4-(trimethylamino)butanoyl-CoA + oxidized [electron-transfer flavoprotein] + H(+) = crotonobetainyl-CoA + reduced [electron-transfer flavoprotein]. The protein operates within amine and polyamine metabolism; carnitine metabolism. In terms of biological role, catalyzes the reduction of crotonobetainyl-CoA to gamma-butyrobetainyl-CoA. The protein is Crotonobetainyl-CoA reductase of Salmonella arizonae (strain ATCC BAA-731 / CDC346-86 / RSK2980).